Reading from the N-terminus, the 538-residue chain is MVKQLKFSEDARQAMLRGVDQLANAVKVTIGPKGRNVVLDKEFTAPLITNDGVTIAKEIELEDPYENMGAKLVQEVANKTNEIAGDGTTTATVLAQAMIQEGLKNVTSGANPVGLRQGIDKAVKVAVEALHENSQKVENKNEIAQVGAISAADEEIGRYISEAMEKVGNDGVITIEESNGLNTELEVVEGMQFDRGYQSPYMVTDSDKMVAELERPYILVTDKKISSFQDILPLLEQVVQSNRPILIVADEVEGDALTNIVLNRMRGTFTAVAVKAPGFGDRRKAMLEDLAILTGAQVITDDLGLDLKDASIDMLGTASKVEVTKDNTTVVDGDGDENSIDARVSQLKSQIEETESDFDREKLQERLAKLAGGVAVIKVGAASETELKERKLRIEDALNSTRAAVEEGIVAGGGTALVNVYQKVSEIEAEGDIETGVNIVLKALTAPVRQIAENAGLEGSVIVERLKNAEPGVGFNAATDEWVNMLEAGIVDPTKVTRSALQHAASVAAMFLTTEAVVASIPEKNNDQPNMGGMPGMM.

ATP is bound by residues 29 to 32 (TIGP), 86 to 90 (DGTTT), G413, 476 to 478 (NAA), and D492.

The protein belongs to the chaperonin (HSP60) family. As to quaternary structure, forms a cylinder of 14 subunits composed of two heptameric rings stacked back-to-back. Interacts with the co-chaperonin GroES.

The protein resides in the cytoplasm. It catalyses the reaction ATP + H2O + a folded polypeptide = ADP + phosphate + an unfolded polypeptide.. Functionally, together with its co-chaperonin GroES, plays an essential role in assisting protein folding. The GroEL-GroES system forms a nano-cage that allows encapsulation of the non-native substrate proteins and provides a physical environment optimized to promote and accelerate protein folding. The polypeptide is Chaperonin GroEL (Staphylococcus aureus (strain bovine RF122 / ET3-1)).